The following is a 350-amino-acid chain: Glyceraldehyde-3-phosphate dehydrogenase (350 aa).

NAD(+)-binding positions include arginine 10–isoleucine 11, aspartate 36, arginine 82, and serine 125. D-glyceraldehyde 3-phosphate is bound by residues serine 161–threonine 163, threonine 193, threonine 222–glycine 223, and arginine 245. Catalysis depends on cysteine 162, which acts as the Nucleophile. Asparagine 331 provides a ligand contact to NAD(+).

It belongs to the glyceraldehyde-3-phosphate dehydrogenase family. As to quaternary structure, homotetramer.

Its subcellular location is the cytoplasm. It catalyses the reaction D-glyceraldehyde 3-phosphate + phosphate + NAD(+) = (2R)-3-phospho-glyceroyl phosphate + NADH + H(+). The protein operates within carbohydrate degradation; glycolysis; pyruvate from D-glyceraldehyde 3-phosphate: step 1/5. In terms of biological role, catalyzes the oxidative phosphorylation of glyceraldehyde 3-phosphate (G3P) to 1,3-bisphosphoglycerate (BPG) using the cofactor NAD. The first reaction step involves the formation of a hemiacetal intermediate between G3P and a cysteine residue, and this hemiacetal intermediate is then oxidized to a thioester, with concomitant reduction of NAD to NADH. The reduced NADH is then exchanged with the second NAD, and the thioester is attacked by a nucleophilic inorganic phosphate to produce BPG. This chain is Glyceraldehyde-3-phosphate dehydrogenase (gap), found in Treponema pallidum (strain Nichols).